Reading from the N-terminus, the 371-residue chain is Flagellar P-ring protein (371 aa).

An N-terminal signal peptide occupies residues 1-21 (MSRSFFATVLGLALAAMTVMA).

The protein belongs to the FlgI family. As to quaternary structure, the basal body constitutes a major portion of the flagellar organelle and consists of four rings (L,P,S, and M) mounted on a central rod.

The protein resides in the periplasm. Its subcellular location is the bacterial flagellum basal body. Its function is as follows. Assembles around the rod to form the L-ring and probably protects the motor/basal body from shearing forces during rotation. This chain is Flagellar P-ring protein, found in Caulobacter sp. (strain K31).